Reading from the N-terminus, the 280-residue chain is 4-diphosphocytidyl-2-C-methyl-D-erythritol kinase (280 aa).

The active site involves lysine 8. 91–101 (PVSAGLAGGSS) is a binding site for ATP. Residue aspartate 133 is part of the active site.

Belongs to the GHMP kinase family. IspE subfamily.

The enzyme catalyses 4-CDP-2-C-methyl-D-erythritol + ATP = 4-CDP-2-C-methyl-D-erythritol 2-phosphate + ADP + H(+). The protein operates within isoprenoid biosynthesis; isopentenyl diphosphate biosynthesis via DXP pathway; isopentenyl diphosphate from 1-deoxy-D-xylulose 5-phosphate: step 3/6. Catalyzes the phosphorylation of the position 2 hydroxy group of 4-diphosphocytidyl-2C-methyl-D-erythritol. The chain is 4-diphosphocytidyl-2-C-methyl-D-erythritol kinase from Clostridium novyi (strain NT).